A 190-amino-acid chain; its full sequence is Probable calcium-binding protein CML27 (190 aa).

EF-hand domains follow at residues L27 to G62, D115 to P150, and R153 to W188. Ca(2+)-binding residues include D40, N42, D44, E46, E51, D128, D130, D132, E139, D166, D168, D170, R172, and E177.

In terms of biological role, potential calcium sensor. The sequence is that of Probable calcium-binding protein CML27 (CML27) from Oryza sativa subsp. japonica (Rice).